We begin with the raw amino-acid sequence, 248 residues long: Triosephosphate isomerase (248 aa).

9-11 (NWK) is a substrate binding site. Catalysis depends on His94, which acts as the Electrophile. The active-site Proton acceptor is the Glu166. Substrate-binding positions include Gly172, Ser212, and 233-234 (GG).

Belongs to the triosephosphate isomerase family. In terms of assembly, homodimer.

Its subcellular location is the cytoplasm. The enzyme catalyses D-glyceraldehyde 3-phosphate = dihydroxyacetone phosphate. Its pathway is carbohydrate biosynthesis; gluconeogenesis. It functions in the pathway carbohydrate degradation; glycolysis; D-glyceraldehyde 3-phosphate from glycerone phosphate: step 1/1. Involved in the gluconeogenesis. Catalyzes stereospecifically the conversion of dihydroxyacetone phosphate (DHAP) to D-glyceraldehyde-3-phosphate (G3P). In Clostridium botulinum (strain ATCC 19397 / Type A), this protein is Triosephosphate isomerase.